Consider the following 74-residue polypeptide: Protein krueppel (74 aa).

4 C2H2-type zinc fingers span residues 1-4 (ERTH), 10-32 (FECPECHKRFTRDHHLKTHMRLH), 38-60 (YHCSHCDRQFVQVANLRRHLRVH), and 66-74 (YACELCDAR).

Belongs to the krueppel C2H2-type zinc-finger protein family.

It is found in the nucleus. Krueppel is a gap class segmentation protein. This Psychoda cinerea (Psychod fly) protein is Protein krueppel (Kr).